The following is a 172-amino-acid chain: Macro domain-containing protein lp_3408 (172 aa).

The Macro domain occupies 1 to 171 (MVEIKVIHGD…VFSTALAALT (171 aa)).

This sequence belongs to the MacroD-type family.

The polypeptide is Macro domain-containing protein lp_3408 (Lactiplantibacillus plantarum (strain ATCC BAA-793 / NCIMB 8826 / WCFS1) (Lactobacillus plantarum)).